The primary structure comprises 269 residues: Ubiquinone/menaquinone biosynthesis C-methyltransferase UbiE (269 aa).

S-adenosyl-L-methionine contacts are provided by residues Thr-92, Asp-113, and 141–142 (NA).

Belongs to the class I-like SAM-binding methyltransferase superfamily. MenG/UbiE family.

It catalyses the reaction a 2-demethylmenaquinol + S-adenosyl-L-methionine = a menaquinol + S-adenosyl-L-homocysteine + H(+). The enzyme catalyses a 2-methoxy-6-(all-trans-polyprenyl)benzene-1,4-diol + S-adenosyl-L-methionine = a 5-methoxy-2-methyl-3-(all-trans-polyprenyl)benzene-1,4-diol + S-adenosyl-L-homocysteine + H(+). It functions in the pathway quinol/quinone metabolism; menaquinone biosynthesis; menaquinol from 1,4-dihydroxy-2-naphthoate: step 2/2. It participates in cofactor biosynthesis; ubiquinone biosynthesis. In terms of biological role, methyltransferase required for the conversion of demethylmenaquinol (DMKH2) to menaquinol (MKH2) and the conversion of 2-polyprenyl-6-methoxy-1,4-benzoquinol (DDMQH2) to 2-polyprenyl-3-methyl-6-methoxy-1,4-benzoquinol (DMQH2). This is Ubiquinone/menaquinone biosynthesis C-methyltransferase UbiE from Brucella melitensis biotype 2 (strain ATCC 23457).